The sequence spans 702 residues: Ribosomal RNA large subunit methyltransferase K/L (702 aa).

The THUMP domain occupies 43–154; sequence LIYQSLMWSR…KETASIALDL (112 aa).

It belongs to the methyltransferase superfamily. RlmKL family.

It localises to the cytoplasm. The catalysed reaction is guanosine(2445) in 23S rRNA + S-adenosyl-L-methionine = N(2)-methylguanosine(2445) in 23S rRNA + S-adenosyl-L-homocysteine + H(+). It catalyses the reaction guanosine(2069) in 23S rRNA + S-adenosyl-L-methionine = N(2)-methylguanosine(2069) in 23S rRNA + S-adenosyl-L-homocysteine + H(+). In terms of biological role, specifically methylates the guanine in position 2445 (m2G2445) and the guanine in position 2069 (m7G2069) of 23S rRNA. This Salmonella schwarzengrund (strain CVM19633) protein is Ribosomal RNA large subunit methyltransferase K/L.